We begin with the raw amino-acid sequence, 20 residues long: Isocitrate dehydrogenase [NADP] (20 aa).

Belongs to the isocitrate and isopropylmalate dehydrogenases family. Requires Mn(2+) as cofactor. Mg(2+) is required as a cofactor.

The protein resides in the cytoplasm. The enzyme catalyses D-threo-isocitrate + NADP(+) = 2-oxoglutarate + CO2 + NADPH. In Naegleria fowleri (Brain eating amoeba), this protein is Isocitrate dehydrogenase [NADP].